A 122-amino-acid chain; its full sequence is Replication termination protein (122 aa).

As to quaternary structure, homodimer.

Plays a role in DNA replication and termination (fork arrest mechanism). Two dimers of rtp bind to the two inverted repeat regions (IRI and IRII) present in the termination site. The binding of each dimer is centered on an 8 bp direct repeat. This chain is Replication termination protein (rtp), found in Bacillus spizizenii (strain ATCC 23059 / NRRL B-14472 / W23) (Bacillus subtilis subsp. spizizenii).